A 216-amino-acid chain; its full sequence is Octanoyltransferase (216 aa).

Residues 35-213 form the BPL/LPL catalytic domain; the sequence is NSNPDFIWIG…TIEEEFNFDF (179 aa). Substrate is bound by residues 77-84, 144-146, and 157-159; these read RGGEVTCH, SIG, and GFS. The Acyl-thioester intermediate role is filled by cysteine 175.

The protein belongs to the LipB family.

It localises to the cytoplasm. It carries out the reaction octanoyl-[ACP] + L-lysyl-[protein] = N(6)-octanoyl-L-lysyl-[protein] + holo-[ACP] + H(+). It participates in protein modification; protein lipoylation via endogenous pathway; protein N(6)-(lipoyl)lysine from octanoyl-[acyl-carrier-protein]: step 1/2. Functionally, catalyzes the transfer of endogenously produced octanoic acid from octanoyl-acyl-carrier-protein onto the lipoyl domains of lipoate-dependent enzymes. Lipoyl-ACP can also act as a substrate although octanoyl-ACP is likely to be the physiological substrate. The sequence is that of Octanoyltransferase from Prochlorococcus marinus (strain MIT 9301).